The sequence spans 183 residues: Glutathione-regulated potassium-efflux system ancillary protein KefG (183 aa).

The protein belongs to the NAD(P)H dehydrogenase (quinone) family. KefG subfamily. As to quaternary structure, interacts with KefB.

It is found in the cell inner membrane. The catalysed reaction is a quinone + NADH + H(+) = a quinol + NAD(+). It carries out the reaction a quinone + NADPH + H(+) = a quinol + NADP(+). Its function is as follows. Regulatory subunit of a potassium efflux system that confers protection against electrophiles. Required for full activity of KefB. In Pectobacterium carotovorum subsp. carotovorum (strain PC1), this protein is Glutathione-regulated potassium-efflux system ancillary protein KefG.